The sequence spans 64 residues: Relaxin (64 aa).

3 disulfides stabilise this stretch: cysteine 11–cysteine 51, cysteine 23–cysteine 64, and cysteine 50–cysteine 55.

The protein belongs to the insulin family. Heterodimer of a B chain and an A chain linked by two disulfide bonds.

It localises to the secreted. This chain is Relaxin, found in Leucoraja erinaceus (Little skate).